A 308-amino-acid chain; its full sequence is Ribosomal protein L11 methyltransferase (308 aa).

The S-adenosyl-L-methionine site is built by Thr-160, Gly-181, Asp-203, and Asn-245.

The protein belongs to the methyltransferase superfamily. PrmA family.

The protein resides in the cytoplasm. It catalyses the reaction L-lysyl-[protein] + 3 S-adenosyl-L-methionine = N(6),N(6),N(6)-trimethyl-L-lysyl-[protein] + 3 S-adenosyl-L-homocysteine + 3 H(+). Methylates ribosomal protein L11. The protein is Ribosomal protein L11 methyltransferase of Thermoanaerobacter sp. (strain X514).